The following is a 360-amino-acid chain: G-protein coupled receptor 15 (360 aa).

At 1–33 (MDPEETSVYLDYYYATSPNSDIRETHSHVPYTS) the chain is on the extracellular side. A helical transmembrane segment spans residues 34-54 (VFLPVFYTAVFLTGVLGNLVL). The Cytoplasmic portion of the chain corresponds to 55-69 (MGALHFKPGSRRLID). A helical membrane pass occupies residues 70-90 (IFIINLAASDFIFLVTLPLWV). The Extracellular segment spans residues 91–120 (DKEASLGLWRTGSFLCKGSSYMISVNMHCS). A helical transmembrane segment spans residues 121–141 (VLLLTCMSVDRYLAIVWPVVS). Residues 142 to 149 (RKFRRTDC) are Cytoplasmic-facing. The chain crosses the membrane as a helical span at residues 150–170 (AYVVCASIWFISCLLGLPTLL). Residues 171–192 (SRELTLIDDKPYCAEKKATPIK) are Extracellular-facing. Residues 193 to 213 (LIWSLVALIFTFFVPLLSIVT) traverse the membrane as a helical segment. Residues 214–239 (CYCCIARKLCAHYQQSGKHNKKLKKS) are Cytoplasmic-facing. Residues 240 to 260 (IKIIFIVVAAFLVSWLPFNTF) traverse the membrane as a helical segment. The Extracellular portion of the chain corresponds to 261-284 (KFLAIVSGLRQEHYLPSAILQLGM). Residues 285-305 (EVSGPLAFANSCVNPFIYYIF) traverse the membrane as a helical segment. Residues 306-360 (DSYIRRAIVHCLCPCLKNYDFGSSTETSDSHLTKALSTFIHAEDFARRRKRSVSL) lie on the Cytoplasmic side of the membrane. Position 359 is a phosphoserine (S359).

The protein belongs to the G-protein coupled receptor 1 family. As to quaternary structure, interacts with adapter YWHAE; this interaction promotes ER-to-Golgi transport of GPR15. Interacts with GNAI1; this interaction initiates the signaling pathway. In terms of processing, phosphorylation is necessary for YWHAE binding and efficient surface expression. Post-translationally, O-glycosylated. Sialylated O-glycans in the N-terminal tail inhibits binding of GPR15LG. Sulfation is required for efficient binding of GPR15LG. In terms of tissue distribution, highly expressed in lymphoid tissues, including macrophages and peripheral blood mononuclear cells.

It is found in the cell membrane. Its function is as follows. G protein-coupled receptor that plays an important role in immune homeostasis. Acts via its natural ligand GPR15LG, a chemokine-like polypeptide strongly expressed in gastrointestinal tissues. GPR15-GPR15LG signaling axis regulates intestinal homeostasis and inflammation through the migration of immune cells. Controls thereby the specific homing of T-cells, particularly FOXP3+ regulatory T-cells (Tregs), to the large intestine lamina propria. Also required for skin localization of thymus-derived dendritic epidermal T-cells. Plays an important role in mediating cytoprotective function as well as angiogenesis of thrombomodulin. Mechanistically, preferentially signals through the Gi/o pathway to inhibit adenylate cyclase activity and activate a phosphatidylinositol-calcium second messenger system that regulates the release of Ca(2+) ions from intracellular stores. In terms of biological role, (Microbial infection) Acts as an alternative coreceptor with CD4 for HIV-1 infection. This Homo sapiens (Human) protein is G-protein coupled receptor 15 (GPR15).